A 1877-amino-acid chain; its full sequence is Neuron navigator 1 (1877 aa).

Position 1 is an N-acetylmethionine (M1). Positions 1–59 (MLGSSVKSVQPEVELSSGGGDEGADEPRGAGRKAAAADGRGMLPKRAKAPGGGGGMAKA) are disordered. Positions 32 to 41 (RKAAAADGRG) are enriched in low complexity. Phosphoserine is present on residues S90, S142, and S152. The disordered stretch occupies residues 114 to 225 (DMAKAPKGLG…PVPSAKGQEE (112 aa)). Residue T159 is modified to Phosphothreonine. S194 and S199 each carry phosphoserine. Residues 205 to 214 (SSKAKAQKSS) are compositionally biased toward low complexity. Residues 255–280 (ESQRKRTVQNVLDLRQNLEETMSSLR) adopt a coiled-coil conformation. Residues 294-336 (YDSDDANPRSVSSLSNRSSPLSWRYGQSSPRLQAGDAPSVGGS) form a disordered region. S296, S308, S312, S362, and S391 each carry phosphoserine. A compositionally biased stretch (low complexity) spans 301 to 315 (PRSVSSLSNRSSPLS). Disordered regions lie at residues 386–839 (KSGY…PLPS) and 892–989 (MSLP…PMSL). Low complexity-rich tracts occupy residues 411-425 (DESS…DASD) and 433-448 (NASS…PTAS). Phosphoserine is present on residues S452, S474, S476, and S490. Basic and acidic residues predominate over residues 476 to 486 (SEEKAPKKLEY). Over residues 503–519 (ERPESCDDSSKGGELKK) the composition is skewed to basic and acidic residues. A Phosphoserine modification is found at S528. At T534 the chain carries Phosphothreonine. At S541 the chain carries Phosphoserine. At T544 the chain carries Phosphothreonine. Residues 555-566 (GKPEGKATDKGK) are compositionally biased toward basic and acidic residues. Position 572 is a phosphothreonine (T572). Over residues 581–591 (AGRDRLSDAKK) the composition is skewed to basic and acidic residues. Composition is skewed to polar residues over residues 615 to 635 (GTAT…QKSS) and 645 to 655 (RKTSLDVSNSA). Position 648 is a phosphoserine (S648). R688 carries the post-translational modification Omega-N-methylarginine. Composition is skewed to polar residues over residues 698-710 (IDPS…QGGL) and 724-733 (GRTTPAPVNQ). The stretch at 731-756 (VNQTDREKEKAKAKAVALDSDNISLK) forms a coiled coil. 5 positions are modified to phosphoserine: S750, S754, S760, S797, and S808. A compositionally biased stretch (polar residues) spans 751-773 (DNISLKSIGSPESTPKNQASHPT). Over residues 805 to 818 (NSNSLDLPSSSDTT) the composition is skewed to low complexity. The span at 902 to 913 (TPVPTPPAPPAA) shows a compositional bias: pro residues. S1000 carries the phosphoserine modification. At T1006 the chain carries Phosphothreonine. Positions 1072 to 1163 (SSAEERMQSE…SEAQAVIQGA (92 aa)) form a coiled coil. T1170 bears the Phosphothreonine mark. 4 disordered regions span residues 1172 to 1204 (KELR…KDAD), 1244 to 1306 (ATPD…EKKE), 1359 to 1383 (LKVA…LSSP), and 1810 to 1843 (KLYH…SLDS). At S1181 the chain carries Phosphoserine. Low complexity predominate over residues 1181–1200 (SSDSISSLNSITSHSSIGSS). The segment covering 1246–1264 (PDSSAPSSPKLQHGSTETA) has biased composition (polar residues). S1265 carries the phosphoserine modification. Positions 1265-1275 (SPSIKSSTSSS) are enriched in low complexity. Residues 1303–1362 (EKKEVSELRSELWEKEMKLTDIRLEALNSAHQLDQLRETMHNMQLEVDLLKAENDRLKVA) adopt a coiled-coil conformation. Positions 1366-1383 (SSGSTPGQVPGSSALSSP) are enriched in polar residues. S1382 bears the Phosphoserine mark.

Belongs to the Nav/unc-53 family. As to quaternary structure, interacts with tubulin. Broadly expressed at low levels. Expressed at high levels in heart, skeletal muscle and placenta.

It localises to the cytoplasm. The protein localises to the cytoskeleton. In terms of biological role, may be involved in neuronal migration. The chain is Neuron navigator 1 (NAV1) from Homo sapiens (Human).